The chain runs to 339 residues: Ketol-acid reductoisomerase (NADP(+)) (339 aa).

The KARI N-terminal Rossmann domain occupies 1–182; the sequence is MKVYYDSDAD…GGGRSGVIET (182 aa). NADP(+) contacts are provided by residues 24 to 27, Arg48, Ser51, Ser53, and 83 to 86; these read YGSQ and DEHQ. The active site involves His108. Gly134 lines the NADP(+) pocket. The KARI C-terminal knotted domain occupies 183–328; it reads TFREEVETDL…ARLRKMMPWI (146 aa). The Mg(2+) site is built by Asp191, Glu195, Glu227, and Glu231. Residue Ser252 coordinates substrate.

Belongs to the ketol-acid reductoisomerase family. Mg(2+) is required as a cofactor.

The catalysed reaction is (2R)-2,3-dihydroxy-3-methylbutanoate + NADP(+) = (2S)-2-acetolactate + NADPH + H(+). It carries out the reaction (2R,3R)-2,3-dihydroxy-3-methylpentanoate + NADP(+) = (S)-2-ethyl-2-hydroxy-3-oxobutanoate + NADPH + H(+). It participates in amino-acid biosynthesis; L-isoleucine biosynthesis; L-isoleucine from 2-oxobutanoate: step 2/4. Its pathway is amino-acid biosynthesis; L-valine biosynthesis; L-valine from pyruvate: step 2/4. Its function is as follows. Involved in the biosynthesis of branched-chain amino acids (BCAA). Catalyzes an alkyl-migration followed by a ketol-acid reduction of (S)-2-acetolactate (S2AL) to yield (R)-2,3-dihydroxy-isovalerate. In the isomerase reaction, S2AL is rearranged via a Mg-dependent methyl migration to produce 3-hydroxy-3-methyl-2-ketobutyrate (HMKB). In the reductase reaction, this 2-ketoacid undergoes a metal-dependent reduction by NADPH to yield (R)-2,3-dihydroxy-isovalerate. This is Ketol-acid reductoisomerase (NADP(+)) from Zymomonas mobilis subsp. mobilis (strain ATCC 31821 / ZM4 / CP4).